Here is a 215-residue protein sequence, read N- to C-terminus: 7-cyano-7-deazaguanine synthase (215 aa).

8–18 contacts ATP; that stretch reads LSAGLDSTVSL. The Zn(2+) site is built by cysteine 191, cysteine 199, cysteine 202, and cysteine 205.

Belongs to the QueC family. In terms of assembly, homodimer. It depends on Zn(2+) as a cofactor.

It carries out the reaction 7-carboxy-7-deazaguanine + NH4(+) + ATP = 7-cyano-7-deazaguanine + ADP + phosphate + H2O + H(+). Its pathway is purine metabolism; 7-cyano-7-deazaguanine biosynthesis. Catalyzes the ATP-dependent conversion of 7-carboxy-7-deazaguanine (CDG) to 7-cyano-7-deazaguanine (preQ(0)). This Carboxydothermus hydrogenoformans (strain ATCC BAA-161 / DSM 6008 / Z-2901) protein is 7-cyano-7-deazaguanine synthase.